Here is a 239-residue protein sequence, read N- to C-terminus: MLFTPPLIPATLISRYKRFLFDAVLEDGTAITGSCPNTGSMRGLTTPGSRIWLSEHDSPTRKYRHMFEMVEADGTVVGINTGMPNRLAEEAILNGRIPELAGYSTIRREQKYGRNSRIDFLLSEPGRPDAYVEVKNVHFMREKGLAEFPDTATKRGAKHLEELGDAAEAGYRSVMLYLIQRDDCERMRICADLDPIYALAFQRAMARGVEAYAVKCAVSPTQISVSGTVKMDEWRPAVL.

This sequence belongs to the SfsA family.

This chain is Sugar fermentation stimulation protein homolog, found in Agrobacterium fabrum (strain C58 / ATCC 33970) (Agrobacterium tumefaciens (strain C58)).